Reading from the N-terminus, the 398-residue chain is 1-aminocyclopropane-1-carboxylate oxidase homolog 5 (398 aa).

Residues 247–347 (KSHIMFGQYY…RISMPCFVST (101 aa)) form the Fe2OG dioxygenase domain. The Fe cation site is built by His-271, Asp-273, and His-327. A 2-oxoglutarate-binding site is contributed by Arg-338.

This sequence belongs to the iron/ascorbate-dependent oxidoreductase family. Fe(2+) is required as a cofactor. As to expression, expressed in etiolated seedlings, leaves, stems and flowers.

The protein is 1-aminocyclopropane-1-carboxylate oxidase homolog 5 (2A6) of Arabidopsis thaliana (Mouse-ear cress).